The sequence spans 92 residues: Small ribosomal subunit protein uS19 (92 aa).

It belongs to the universal ribosomal protein uS19 family.

Protein S19 forms a complex with S13 that binds strongly to the 16S ribosomal RNA. This Leuconostoc mesenteroides subsp. mesenteroides (strain ATCC 8293 / DSM 20343 / BCRC 11652 / CCM 1803 / JCM 6124 / NCDO 523 / NBRC 100496 / NCIMB 8023 / NCTC 12954 / NRRL B-1118 / 37Y) protein is Small ribosomal subunit protein uS19.